The sequence spans 198 residues: Glycerol-3-phosphate acyltransferase 1 (198 aa).

5 helical membrane passes run 5 to 25 (ALLALLLSYLIGAIPAAAWLA), 52 to 72 (GPALLVASFDILKGVLAVLLA), 81 to 101 (WAALCGVLAVIGHNFSPFLAF), 111 to 131 (FGVIAILDPVLGLTTFVLAIA), and 138 to 158 (FVSAGSIMGAFIAGALVLVLP).

This sequence belongs to the PlsY family. In terms of assembly, probably interacts with PlsX.

It is found in the cell membrane. It catalyses the reaction an acyl phosphate + sn-glycerol 3-phosphate = a 1-acyl-sn-glycero-3-phosphate + phosphate. Its pathway is lipid metabolism; phospholipid metabolism. Its function is as follows. Catalyzes the transfer of an acyl group from acyl-phosphate (acyl-PO(4)) to glycerol-3-phosphate (G3P) to form lysophosphatidic acid (LPA). This enzyme utilizes acyl-phosphate as fatty acyl donor, but not acyl-CoA or acyl-ACP. The chain is Glycerol-3-phosphate acyltransferase 1 from Deinococcus radiodurans (strain ATCC 13939 / DSM 20539 / JCM 16871 / CCUG 27074 / LMG 4051 / NBRC 15346 / NCIMB 9279 / VKM B-1422 / R1).